The sequence spans 187 residues: Probable chorismate pyruvate-lyase (187 aa).

Substrate contacts are provided by Arg80, Leu117, and Glu176.

It belongs to the UbiC family.

The protein localises to the cytoplasm. It carries out the reaction chorismate = 4-hydroxybenzoate + pyruvate. The protein operates within cofactor biosynthesis; ubiquinone biosynthesis. In terms of biological role, removes the pyruvyl group from chorismate, with concomitant aromatization of the ring, to provide 4-hydroxybenzoate (4HB) for the ubiquinone pathway. This is Probable chorismate pyruvate-lyase from Halorhodospira halophila (strain DSM 244 / SL1) (Ectothiorhodospira halophila (strain DSM 244 / SL1)).